We begin with the raw amino-acid sequence, 93 residues long: Small ribosomal subunit protein uS19m (93 aa).

It belongs to the universal ribosomal protein uS19 family.

It is found in the mitochondrion. This Marchantia polymorpha (Common liverwort) protein is Small ribosomal subunit protein uS19m (RPS19).